Here is a 636-residue protein sequence, read N- to C-terminus: Putative cysteine-rich receptor-like protein kinase 33 (636 aa).

An N-terminal signal peptide occupies residues 1-25; that stretch reads MRKTKKISFLIFWVVLISIIGAISS. 2 consecutive Gnk2-homologous domains span residues 26-128 and 138-245; these read QQCN…NSSF and YMEH…LYPF. The Extracellular portion of the chain corresponds to 26–266; that stretch reads QQCNETGYFE…PGSKRNISVG (241 aa). 10 N-linked (GlcNAc...) asparagine glycosylation sites follow: N29, N63, N105, N125, N149, N173, N185, N188, N250, and N262. The chain crosses the membrane as a helical span at residues 267–287; sequence FFVAIVVATGVVISVLSTLVV. Topologically, residues 288 to 636 are cytoplasmic; the sequence is VLVCRKRKTD…DSLIDDLVPR (349 aa). A Protein kinase domain is found at 321-600; the sequence is FSKCNMLGQG…MMLTSNSITL (280 aa). Residues 327-335 and K349 each bind ATP; that span reads LGQGGFGEV. Y394 is modified (phosphotyrosine). D446 serves as the catalytic Proton acceptor. S450 is subject to Phosphoserine. T486 carries the phosphothreonine modification. The residue at position 494 (Y494) is a Phosphotyrosine.

It belongs to the protein kinase superfamily. Ser/Thr protein kinase family. CRK subfamily.

It localises to the membrane. The catalysed reaction is L-seryl-[protein] + ATP = O-phospho-L-seryl-[protein] + ADP + H(+). It carries out the reaction L-threonyl-[protein] + ATP = O-phospho-L-threonyl-[protein] + ADP + H(+). The sequence is that of Putative cysteine-rich receptor-like protein kinase 33 (CRK33) from Arabidopsis thaliana (Mouse-ear cress).